A 362-amino-acid chain; its full sequence is UDP-N-acetylglucosamine--N-acetylmuramyl-(pentapeptide) pyrophosphoryl-undecaprenol N-acetylglucosamine transferase (362 aa).

UDP-N-acetyl-alpha-D-glucosamine-binding positions include 14–16 (TGG), N126, R166, S193, and Q294.

It belongs to the glycosyltransferase 28 family. MurG subfamily.

It localises to the cell inner membrane. The catalysed reaction is di-trans,octa-cis-undecaprenyl diphospho-N-acetyl-alpha-D-muramoyl-L-alanyl-D-glutamyl-meso-2,6-diaminopimeloyl-D-alanyl-D-alanine + UDP-N-acetyl-alpha-D-glucosamine = di-trans,octa-cis-undecaprenyl diphospho-[N-acetyl-alpha-D-glucosaminyl-(1-&gt;4)]-N-acetyl-alpha-D-muramoyl-L-alanyl-D-glutamyl-meso-2,6-diaminopimeloyl-D-alanyl-D-alanine + UDP + H(+). It functions in the pathway cell wall biogenesis; peptidoglycan biosynthesis. Cell wall formation. Catalyzes the transfer of a GlcNAc subunit on undecaprenyl-pyrophosphoryl-MurNAc-pentapeptide (lipid intermediate I) to form undecaprenyl-pyrophosphoryl-MurNAc-(pentapeptide)GlcNAc (lipid intermediate II). The protein is UDP-N-acetylglucosamine--N-acetylmuramyl-(pentapeptide) pyrophosphoryl-undecaprenol N-acetylglucosamine transferase of Paracoccus denitrificans (strain Pd 1222).